The following is a 631-amino-acid chain: Polyadenylate-binding protein, cytoplasmic and nuclear (631 aa).

Residues 1–56 (MSDLQESLEKLSINEKAPQAPADDATPSNTTTLEKESSESAAAAAGEGAGEEGEEA) form a disordered region. RRM domains lie at 58-136 (ASLY…WSQR), 146-223 (GNIF…KHVS), 239-316 (TNVY…RAQK), and 342-419 (VNLF…LAQR). The segment at 518–545 (GGEFNGPNGQRQQRGAYPPNRNQKGGRP) is disordered. The 82-residue stretch at 545-626 (PQRDLAAIIS…ALTAFEEYKK (82 aa)) folds into the PABC domain.

The protein belongs to the polyadenylate-binding protein type-1 family.

It localises to the cytoplasm. It is found in the nucleus. Functionally, binds the poly(A) tail of mRNA. Appears to be an important mediator of the multiple roles of the poly(A) tail in mRNA biogenesis, stability and translation. In the nucleus, involved in both mRNA cleavage and polyadenylation. Is also required for efficient mRNA export to the cytoplasm. Acts in concert with a poly(A)-specific nuclease (PAN) to affect poly(A) tail shortening, which may occur concomitantly with either nucleocytoplasmic mRNA transport or translational initiation. In the cytoplasm, stimulates translation initiation and regulates mRNA decay through translation termination-coupled poly(A) shortening, probably mediated by PAN. This Meyerozyma guilliermondii (strain ATCC 6260 / CBS 566 / DSM 6381 / JCM 1539 / NBRC 10279 / NRRL Y-324) (Yeast) protein is Polyadenylate-binding protein, cytoplasmic and nuclear (PAB1).